The sequence spans 352 residues: DNA polymerase IV (352 aa).

Residues 6–186 (IIHIDMDAFY…LPLGKIPGVG (181 aa)) form the UmuC domain. 2 residues coordinate Mg(2+): Asp-10 and Asp-104. Glu-105 is an active-site residue.

The protein belongs to the DNA polymerase type-Y family. Monomer. The cofactor is Mg(2+).

The protein resides in the cytoplasm. It carries out the reaction DNA(n) + a 2'-deoxyribonucleoside 5'-triphosphate = DNA(n+1) + diphosphate. Functionally, poorly processive, error-prone DNA polymerase involved in untargeted mutagenesis. Copies undamaged DNA at stalled replication forks, which arise in vivo from mismatched or misaligned primer ends. These misaligned primers can be extended by PolIV. Exhibits no 3'-5' exonuclease (proofreading) activity. May be involved in translesional synthesis, in conjunction with the beta clamp from PolIII. This chain is DNA polymerase IV, found in Neisseria meningitidis serogroup C / serotype 2a (strain ATCC 700532 / DSM 15464 / FAM18).